We begin with the raw amino-acid sequence, 144 residues long: Putative golgin subfamily A member 2B (144 aa).

Disordered regions lie at residues 1-20 (MDSE…PEDL) and 95-132 (SCGR…EAAG). Residues 110–131 (AEGGGVHQQAGPGQGRGEGEAA) are compositionally biased toward gly residues.

This sequence belongs to the GOLGA2 family.

The sequence is that of Putative golgin subfamily A member 2B (GOLGA2P5) from Homo sapiens (Human).